The primary structure comprises 390 residues: Chorismate synthase (390 aa).

Positions 39 and 45 each coordinate NADP(+). FMN contacts are provided by residues 132 to 134 (RSS), 253 to 254 (NA), Gly-298, 313 to 317 (KPIPT), and Arg-339.

It belongs to the chorismate synthase family. In terms of assembly, homotetramer. Requires FMNH2 as cofactor.

The enzyme catalyses 5-O-(1-carboxyvinyl)-3-phosphoshikimate = chorismate + phosphate. It participates in metabolic intermediate biosynthesis; chorismate biosynthesis; chorismate from D-erythrose 4-phosphate and phosphoenolpyruvate: step 7/7. Its function is as follows. Catalyzes the anti-1,4-elimination of the C-3 phosphate and the C-6 proR hydrogen from 5-enolpyruvylshikimate-3-phosphate (EPSP) to yield chorismate, which is the branch point compound that serves as the starting substrate for the three terminal pathways of aromatic amino acid biosynthesis. This reaction introduces a second double bond into the aromatic ring system. This is Chorismate synthase from Bacillus pumilus (strain SAFR-032).